Reading from the N-terminus, the 143-residue chain is Putative aryl-alcohol dehydrogenase AAD15 (143 aa).

Belongs to the aldo/keto reductase family. Aldo/keto reductase 2 subfamily.

Putative aryl-alcohol dehydrogenase. The polypeptide is Putative aryl-alcohol dehydrogenase AAD15 (AAD15) (Saccharomyces cerevisiae (strain ATCC 204508 / S288c) (Baker's yeast)).